Here is a 397-residue protein sequence, read N- to C-terminus: Heterogeneous nuclear ribonucleoprotein K homolog (397 aa).

The tract at residues 1-41 (MMIKVGAAINGTDSPKAMKREHDNDDGDRTGRHKRPKTDGF) is disordered. The segment covering 16–30 (KAMKREHDNDDGDRT) has biased composition (basic and acidic residues). KH domains lie at 49–111 (KFEV…LKDV) and 124–189 (PCEV…IEEV). Residues 220 to 279 (GGFPGNMPAGGPPNNRGPAPQRGGQGPPGGPRSYGGAITQGGGQRSFEAGDFQQFRGGPG) are disordered. The span at 224–241 (GNMPAGGPPNNRGPAPQR) shows a compositional bias: low complexity. A KH 3 domain is found at 316–379 (VTTAQVTIPS…QQIHSAQYLL (64 aa)).

Interacts with alg-1; the interaction is direct and may be strengthened through RNA-protein association. In terms of tissue distribution, expressed in gut, muscle, neuronal and hypodermal tissues. Highly expressed in the germline and oocytes.

Its subcellular location is the nucleus. The protein resides in the cytoplasm. Its function is as follows. RNA-binding protein which functions together with alg-1, a component of the miRNA loading complex, to modulate the processing and activity of specific miRNAs such as miR-58 and let-7 to regulate gene expression at the post-transcriptional level during embryonic, hypodermal and neuronal development. Promotes the lsy-6-mediated repression of cog-1 in uterine cells. In embryos, may play a role in the DNA damage response. This Caenorhabditis elegans protein is Heterogeneous nuclear ribonucleoprotein K homolog.